The primary structure comprises 201 residues: Pyridoxal 5'-phosphate synthase subunit PdxT (201 aa).

Position 49-51 (49-51) interacts with L-glutamine; sequence GES. The active-site Nucleophile is the C81. Residues R110 and 139–140 contribute to the L-glutamine site; that span reads IR. Residues H180 and E182 each act as charge relay system in the active site.

Belongs to the glutaminase PdxT/SNO family. As to quaternary structure, in the presence of PdxS, forms a dodecamer of heterodimers. Only shows activity in the heterodimer.

It catalyses the reaction aldehydo-D-ribose 5-phosphate + D-glyceraldehyde 3-phosphate + L-glutamine = pyridoxal 5'-phosphate + L-glutamate + phosphate + 3 H2O + H(+). The catalysed reaction is L-glutamine + H2O = L-glutamate + NH4(+). It participates in cofactor biosynthesis; pyridoxal 5'-phosphate biosynthesis. In terms of biological role, catalyzes the hydrolysis of glutamine to glutamate and ammonia as part of the biosynthesis of pyridoxal 5'-phosphate. The resulting ammonia molecule is channeled to the active site of PdxS. The sequence is that of Pyridoxal 5'-phosphate synthase subunit PdxT from Salinispora arenicola (strain CNS-205).